A 455-amino-acid polypeptide reads, in one-letter code: Dihydrolipoyllysine-residue succinyltransferase component of 2-oxoglutarate dehydrogenase complex, mitochondrial (455 aa).

Residues Met1–Lys68 constitute a mitochondrion transit peptide. The region spanning Val71–Arg145 is the Lipoyl-binding domain. Residue Ser82 is modified to Phosphoserine. Position 111 is an N6-lipoyllysine (Lys111). Residue Lys155 is modified to N6-acetyllysine. A compositionally biased stretch (low complexity) spans Lys155–Ala173. The interval Lys155 to Gly220 is disordered. Residues Val174–Ser193 show a composition bias toward pro residues. Lys269, Lys274, Lys275, Lys279, and Lys309 each carry N6-acetyllysine. Active-site residues include His426 and Asp430.

Belongs to the 2-oxoacid dehydrogenase family. The 2-oxoglutarate dehydrogenase complex is composed of OGDH (2-oxoglutarate dehydrogenase; E1), DLST (dihydrolipoamide succinyltransferase; E2), DLD (dihydrolipoamide dehydrogenase; E3) and the assembly factor KGD4. It contains multiple copies of the three enzymatic components (E1, E2 and E3). In the nucleus, the 2-oxoglutarate dehydrogenase complex associates with KAT2A. Interacts with ABHD11; this interaction maintains the functional lipoylation of the 2-oxoglutarate dehydrogenase complex. It depends on (R)-lipoate as a cofactor.

The protein resides in the mitochondrion matrix. It is found in the nucleus. It catalyses the reaction N(6)-[(R)-dihydrolipoyl]-L-lysyl-[protein] + succinyl-CoA = N(6)-[(R)-S(8)-succinyldihydrolipoyl]-L-lysyl-[protein] + CoA. The protein operates within amino-acid degradation; L-lysine degradation via saccharopine pathway; glutaryl-CoA from L-lysine: step 6/6. Its pathway is carbohydrate metabolism; tricarboxylic acid cycle. In terms of biological role, dihydrolipoamide succinyltransferase (E2) component of the 2-oxoglutarate dehydrogenase complex. The 2-oxoglutarate dehydrogenase complex catalyzes the overall conversion of 2-oxoglutarate to succinyl-CoA and CO(2). The 2-oxoglutarate dehydrogenase complex is mainly active in the mitochondrion. A fraction of the 2-oxoglutarate dehydrogenase complex also localizes in the nucleus and is required for lysine succinylation of histones: associates with KAT2A on chromatin and provides succinyl-CoA to histone succinyltransferase KAT2A. This is Dihydrolipoyllysine-residue succinyltransferase component of 2-oxoglutarate dehydrogenase complex, mitochondrial from Bos taurus (Bovine).